The primary structure comprises 359 residues: uncharacterized protein (359 aa).

The segment covering 73–88 (AATAGTTPATGASGSA) has biased composition (low complexity). The disordered stretch occupies residues 73–93 (AATAGTTPATGASGSARPTDA). The Macro domain maps to 179–354 (PSTCRGDNVS…AFSAAIQAGE (176 aa)).

This is an uncharacterized protein from Mycobacterium tuberculosis (strain ATCC 25618 / H37Rv).